A 179-amino-acid chain; its full sequence is Large ribosomal subunit protein uL22c (179 aa).

It belongs to the universal ribosomal protein uL22 family. In terms of assembly, part of the 50S ribosomal subunit.

It localises to the plastid. Its subcellular location is the chloroplast. This protein binds specifically to 23S rRNA. Functionally, the globular domain of the protein is located near the polypeptide exit tunnel on the outside of the subunit, while an extended beta-hairpin is found that lines the wall of the exit tunnel in the center of the 70S ribosome. The protein is Large ribosomal subunit protein uL22c (rpl22) of Ranunculus macranthus (Large buttercup).